Consider the following 65-residue polypeptide: Protein TrbD (65 aa).

The polypeptide is Protein TrbD (trbD) (Escherichia coli (strain K12)).